Here is a 473-residue protein sequence, read N- to C-terminus: Bifunctional protein HldE (473 aa).

Residues 1-318 form a ribokinase region; that stretch reads MKLSMPRFDQ…RAIQREEGSE (318 aa). 194–197 provides a ligand contact to ATP; that stretch reads NLSE. D263 is an active-site residue. The interval 343–473 is cytidylyltransferase; sequence FTNGCFDILH…TAIVEKIRKN (131 aa).

In the N-terminal section; belongs to the carbohydrate kinase PfkB family. This sequence in the C-terminal section; belongs to the cytidylyltransferase family. In terms of assembly, homodimer.

It catalyses the reaction D-glycero-beta-D-manno-heptose 7-phosphate + ATP = D-glycero-beta-D-manno-heptose 1,7-bisphosphate + ADP + H(+). It carries out the reaction D-glycero-beta-D-manno-heptose 1-phosphate + ATP + H(+) = ADP-D-glycero-beta-D-manno-heptose + diphosphate. It functions in the pathway nucleotide-sugar biosynthesis; ADP-L-glycero-beta-D-manno-heptose biosynthesis; ADP-L-glycero-beta-D-manno-heptose from D-glycero-beta-D-manno-heptose 7-phosphate: step 1/4. Its pathway is nucleotide-sugar biosynthesis; ADP-L-glycero-beta-D-manno-heptose biosynthesis; ADP-L-glycero-beta-D-manno-heptose from D-glycero-beta-D-manno-heptose 7-phosphate: step 3/4. Catalyzes the phosphorylation of D-glycero-D-manno-heptose 7-phosphate at the C-1 position to selectively form D-glycero-beta-D-manno-heptose-1,7-bisphosphate. Functionally, catalyzes the ADP transfer from ATP to D-glycero-beta-D-manno-heptose 1-phosphate, yielding ADP-D-glycero-beta-D-manno-heptose. This Pseudomonas putida (strain GB-1) protein is Bifunctional protein HldE.